Here is a 485-residue protein sequence, read N- to C-terminus: Outer membrane protein OprM (485 aa).

The first 17 residues, 1 to 17 (MKRSFLSLAVAAVVLSG), serve as a signal peptide directing secretion. Cys18 carries N-palmitoyl cysteine lipidation. Residue Cys18 is the site of S-diacylglycerol cysteine attachment.

This sequence belongs to the outer membrane factor (OMF) (TC 1.B.17) family. As to quaternary structure, component of the MexAB-OprM multidrug efflux complex, composed of six MexA subunits forming a hexameric tube, binding to a MexB trimer, which interact with the trimeric OprM outer membrane channel protein. The OprM homotrimer forms a 135 Angstroms-long pore. It consists of a beta-barrel, which is probably inserted in the outer membrane, and an alpha-barrel formed by alpha-helices which probably spans the periplasm. In the ground state the periplasmic end is closed, while the outer membrane end opening is 6-8 Angstroms in diameter. OprM does not directly contact MexB; instead, MexA joins MexB and OprM by forming a funnel-like hexamer anchored to the inner membrane. MexA may initially form a hexameric ring complex with MexB prior to OprM, then OprM undergoes a conformational change as it contacts MexA, allowing the periplasmic gate to open. It is thought that, under high intracellular substrate concentration, MexB ejects substrate into the tunnel formed by MexA-OprM; as the substrate level declines, conformational changes in MexB cause efflux to reduce and stop and the complex shifts to the closed state. MexB subunit acts as a substrate:proton antiporter and activity is enhanced significantly when in complex with MexA and OprM, in vitro.

The protein localises to the cell outer membrane. Export of antibiotics and solvents is dramatically decreased in the presence of the protonophore carbonyl cyanide m-chlorophenylhydrazone (CCCP), therefore may be driven by a proton gradient. Antibiotic efflux is inhibited by pyridopyrimidine derivatives, such as ABI-PP, acting by binding to a hydrophobic pocket in MexB. Its function is as follows. The outer membrane component of the MexAB-OprM efflux system that confers multidrug resistance. Functions as the major efflux pump for n-hexane and p-xylene efflux. Has been shown in one study to be involved in the active efflux of the autoinducer N-(3-oxododecanoyl) homoserine lactone, thereby playing an indirect role in quorum-sensing; but has been shown in another study not to be involved in efflux of this autoinducer. Over-expression of the pump increases antibiotic and solvent efflux capacities. Can replace the OprJ outer membrane component of the MexCD-OprJ pump; the antibiotics exported are those exported by the intact MexCD pump, showing that efflux substrate specificity is not conferred by this component. Serves as the outer membrane component for the MexXY efflux system. Implicated in the secretion of the siderophore pyoverdine. OprM is probably involved in the efflux of the siderophore across the outer membrane. The sequence is that of Outer membrane protein OprM (oprM) from Pseudomonas aeruginosa (strain ATCC 15692 / DSM 22644 / CIP 104116 / JCM 14847 / LMG 12228 / 1C / PRS 101 / PAO1).